The sequence spans 95 residues: Large ribosomal subunit protein bL27 (95 aa).

Positions 1-25 (MAHKKGTGSTRNGRDSNAQRLGVKR) are disordered. Positions 7–19 (TGSTRNGRDSNAQ) are enriched in polar residues.

It belongs to the bacterial ribosomal protein bL27 family.

This is Large ribosomal subunit protein bL27 from Gloeobacter violaceus (strain ATCC 29082 / PCC 7421).